The following is a 337-amino-acid chain: Fructose-1,6-bisphosphatase class 1 (337 aa).

Positions 91, 113, 115, and 116 each coordinate Mg(2+). Residues 116–119, N209, Y242, and K275 each bind substrate; that span reads DGSS. E281 is a binding site for Mg(2+).

The protein belongs to the FBPase class 1 family. Homotetramer. Requires Mg(2+) as cofactor.

Its subcellular location is the cytoplasm. The catalysed reaction is beta-D-fructose 1,6-bisphosphate + H2O = beta-D-fructose 6-phosphate + phosphate. The protein operates within carbohydrate biosynthesis; gluconeogenesis. The sequence is that of Fructose-1,6-bisphosphatase class 1 from Nitratidesulfovibrio vulgaris (strain DP4) (Desulfovibrio vulgaris).